The sequence spans 1504 residues: Nischarin (1504 aa).

An N-acetylalanine modification is found at alanine 2. The interval 2–133 (ATARTFGPER…GITAALAEEL (132 aa)) is necessary for binding to phosphoinositide-3-P; not sufficient for targeting to endosomes. The PX domain occupies 11–121 (REAEPAKEAR…AHFLHFHFYE (111 aa)). Residues 120–695 (YEINGITAAL…ERLALEWALG (576 aa)) are necessary for homooligomerization and targeting to endosomes. The tract at residues 245-869 (LSVRFSATSM…LVYSDKRMVQ (625 aa)) is interaction with PAK1. LRR repeat units follow at residues 288-309 (ALTTLDLSHNSVSEIDESVKLI), 311-332 (KIEFLDLSHNGLLVVDNLQHLY), 333-354 (NLVHLDLSYNKLSSLEGLHTKL), 356-377 (NIKTLNLAGNLLESLSGLHKLY), 378-399 (SLVNLDLRDNRIEQMEEVRSIG), and 403-424 (CLEHVSLLNNPLSIIPDYRTKV). Residues 463-478 (KSKLSNPEKKGGEDSR) are compositionally biased toward basic and acidic residues. Disordered stretches follow at residues 463–501 (KSKLSNPEKKGGEDSRLSAAPCIRPSSSPPTVAPASASL), 524–547 (SSTDSLTPEHQPIAQGCSDSLESI), 554–573 (SDDLRDVPGAVGGASPEHAE), and 628–687 (REEG…EEER). 3 positions are modified to phosphoserine: serine 541, serine 543, and serine 546. Residues 634-695 (EQGEEEDEEE…ERLALEWALG (62 aa)) adopt a coiled-coil conformation. Acidic residues-rich tracts occupy residues 635-649 (QGEEEDEEEEEEEDV) and 661-685 (DVEEEEGGGQGEEEEEEEEDEEAEE). Residues 660–869 (PDVEEEEGGG…LVYSDKRMVQ (210 aa)) are interaction with LIMK. Positions 709–807 (KVLWCFLIHV…ANLHEFHADL (99 aa)) are interaction with ITGA5. Residues 1016–1104 (TPGTGGSPQG…PAPPPAEAPA (89 aa)) are disordered. Serine 1022 carries the post-translational modification Phosphoserine. A compositionally biased stretch (basic and acidic residues) spans 1032 to 1043 (PAERRASNDQRP). Positions 1063-1078 (PAAASASGPAKTPAPA) are enriched in low complexity. The residue at position 1282 (threonine 1282) is a Phosphothreonine. Serine 1284 is subject to Phosphoserine.

As to quaternary structure, homooligomer. Interacts with GRB2. Interacts with PIK3R1; probably associates with the PI3-kinase complex. Interacts with IRS4. Found in a complex with ITGA5 and PAK1. Found in a complex with LIMK1 and PAK1. Interacts with ITGA5 (via cytoplasmic domain); this interaction is direct. Interacts with PAK1 (via kinase domain); this interaction is direct and is increased upon activation of PAK1. Interacts with LIMK1 (via PDZ and kinase domain); this interaction is direct. Interacts with LIMK2; this interaction depends on LIMK2 activity. Interacts with RAC1 (activated state). Interacts with STK11; this interaction may increase STK11 activity. In terms of tissue distribution, isoform 1, isoform 3 and isoform 4 are expressed in brain. Isoform 1 is expressed in endocrine tissues.

The protein resides in the cell membrane. The protein localises to the cytoplasm. Its subcellular location is the early endosome. It localises to the recycling endosome. Acts either as the functional imidazoline-1 receptor (I1R) candidate or as a membrane-associated mediator of the I1R signaling. Binds numerous imidazoline ligands that induces initiation of cell-signaling cascades triggering to cell survival, growth and migration. Its activation by the agonist rilmenidine induces an increase in phosphorylation of mitogen-activated protein kinases MAPK1 and MAPK3 in rostral ventrolateral medulla (RVLM) neurons that exhibited rilmenidine-evoked hypotension. Blocking its activation with efaroxan abolished rilmenidine-induced mitogen-activated protein kinase phosphorylation in RVLM neurons. Acts as a modulator of Rac-regulated signal transduction pathways. Suppresses Rac1-stimulated cell migration by interacting with PAK1 and inhibiting its kinase activity. Also blocks Pak-independent Rac signaling by interacting with RAC1 and inhibiting Rac1-stimulated NF-kB response element and cyclin D1 promoter activation. Also inhibits LIMK1 kinase activity by reducing LIMK1 'Tyr-508' phosphorylation. Inhibits Rac-induced cell migration and invasion in breast and colon epithelial cells. Inhibits lamellipodia formation, when overexpressed. Plays a role in protection against apoptosis. Involved in association with IRS4 in the enhancement of insulin activation of MAPK1 and MAPK3. When overexpressed, induces a redistribution of cell surface ITGA5 integrin to intracellular endosomal structures. The sequence is that of Nischarin (NISCH) from Homo sapiens (Human).